The following is an 854-amino-acid chain: Aryl hydrocarbon receptor (854 aa).

The propeptide occupies 1-9 (MSSGANITY). A disordered region spans residues 1 to 38 (MSSGANITYASRKRRKPVQKTVKPIPAEGIKSNPSKRH). 2 short sequence motifs (nuclear localization signal) span residues 12-15 (RKRR) and 36-41 (KRHRDR). The region spanning 26-79 (PAEGIKSNPSKRHRDRLNTELDRLASLLPFPQDVINKLDKLSVLRLSVSYLRAK) is the bHLH domain. The DNA-binding stretch occupies residues 37-65 (RHRDRLNTELDRLASLLPFPQDVINKLDK). Required for maintaining the overall integrity of the AHR:ARNT heterodimer and its transcriptional activity regions lie at residues 49–81 (LASL…AKSF), 116–124 (LLQALNGFV), and 264–266 (FAI). Residues 63–71 (LDKLSVLRL) carry the Nuclear export signal motif. A PAS 1 domain is found at 111–175 (QEGEFLLQAL…AEFQRQLHWA (65 aa)). The PAS 2 domain occupies 270 to 340 (LQPPSILEIR…CAESHIRMIK (71 aa)). Residues 346–387 (MTVFRLLAKHSRWRWVQSNARLIYRNGRPDYIIATQRPLTDE) enclose the PAC domain. The interval 425 to 451 (LPIRTKSNTSRKDWAPQSTPSKDSFHP) is disordered. Over residues 440–451 (PQSTPSKDSFHP) the composition is skewed to polar residues.

Homodimer. Heterodimer; efficient DNA binding requires dimerization with another bHLH protein. Interacts with ARNT; the heterodimer ARNT:AHR binds to core DNA sequence 5'-TGCGTG-3' within the dioxin response element (DRE) of target gene promoters and activates their transcription. Binds MYBBP1A. Interacts with coactivators including SRC-1, RIP140 and NOCA7, and with the corepressor SMRT. Interacts with NEDD8 and IVNS1ABP. Interacts with BMAL1. Interacts with HSP90AB1. Interacts with TIPARP; leading to mono-ADP-ribosylation of AHR and subsequent inhibition of AHR. Mono-ADP-ribosylated, leading to inhibit transcription activator activity of AHR.

The protein resides in the cytoplasm. The protein localises to the nucleus. Ligand-activated transcription factor that enables cells to adapt to changing conditions by sensing compounds from the environment, diet, microbiome and cellular metabolism, and which plays important roles in development, immunity and cancer. Upon ligand binding, translocates into the nucleus, where it heterodimerizes with ARNT and induces transcription by binding to xenobiotic response elements (XRE). Regulates a variety of biological processes, including angiogenesis, hematopoiesis, drug and lipid metabolism, cell motility and immune modulation. Xenobiotics can act as ligands: upon xenobiotic-binding, activates the expression of multiple phase I and II xenobiotic chemical metabolizing enzyme genes (such as the CYP1A1 gene). Mediates biochemical and toxic effects of halogenated aromatic hydrocarbons. Next to xenobiotics, natural ligands derived from plants, microbiota, and endogenous metabolism are potent AHR agonists. Tryptophan (Trp) derivatives constitute an important class of endogenous AHR ligands. Acts as a negative regulator of anti-tumor immunity: indoles and kynurenic acid generated by Trp catabolism act as ligand and activate AHR, thereby promoting AHR-driven cancer cell motility and suppressing adaptive immunity. Regulates the circadian clock by inhibiting the basal and circadian expression of the core circadian component PER1. Inhibits PER1 by repressing the CLOCK-BMAL1 heterodimer mediated transcriptional activation of PER1. The heterodimer ARNT:AHR binds to core DNA sequence 5'-TGCGTG-3' within the dioxin response element (DRE) of target gene promoters and activates their transcription. This Mus spicilegus (Steppe mouse) protein is Aryl hydrocarbon receptor (Ahr).